A 338-amino-acid chain; its full sequence is Putative ankyrin repeat protein CBU_0781 (338 aa).

The segment at Met1 to Pro31 is disordered. A compositionally biased stretch (low complexity) spans Pro7–Arg19. The span at Thr20 to Pro31 shows a compositional bias: basic residues. ANK repeat units lie at residues Gln92–Lys124 and Leu125–Lys157. A coiled-coil region spans residues Ser197–Arg242. The interval Lys319–Arg338 is disordered. The span at Leu325 to Arg338 shows a compositional bias: low complexity.

This is Putative ankyrin repeat protein CBU_0781 from Coxiella burnetii (strain RSA 493 / Nine Mile phase I).